The following is a 258-amino-acid chain: Global transcriptional regulator CodY (258 aa).

The tract at residues 1-156 (MSSLLTKTRM…SATIVGMEML (156 aa)) is GAF domain. A DNA-binding region (H-T-H motif) is located at residues 204-223 (ASKIADKVGITRSVIVNALR).

Belongs to the CodY family.

It localises to the cytoplasm. DNA-binding global transcriptional regulator which is involved in the adaptive response to starvation and acts by directly or indirectly controlling the expression of numerous genes in response to nutrient availability. During rapid exponential growth, CodY is highly active and represses genes whose products allow adaptation to nutrient depletion. This chain is Global transcriptional regulator CodY, found in Clostridium beijerinckii (strain ATCC 51743 / NCIMB 8052) (Clostridium acetobutylicum).